We begin with the raw amino-acid sequence, 218 residues long: Small ribosomal subunit protein uS3 (218 aa).

A KH type-2 domain is found at 38–106; it reads IREFISKRLS…RVHINILEIK (69 aa).

This sequence belongs to the universal ribosomal protein uS3 family. Part of the 30S ribosomal subunit. Forms a tight complex with proteins S10 and S14.

Functionally, binds the lower part of the 30S subunit head. Binds mRNA in the 70S ribosome, positioning it for translation. This is Small ribosomal subunit protein uS3 from Bacillus pumilus (strain SAFR-032).